A 234-amino-acid polypeptide reads, in one-letter code: Putative lipoyltransferase 2, mitochondrial (234 aa).

The N-terminal 28 residues, 1–28, are a transit peptide targeting the mitochondrion; sequence MPFVRPLVTVVRAGRHSYSAGLQLQQRL. A BPL/LPL catalytic domain is found at 39–220; it reads AEFRNYLVLQ…SFAKVFECRL (182 aa). Residues 83–90, 150–152, and 163–165 each bind substrate; these read RGGLITFH, AIG, and GIG. The active-site Acyl-thioester intermediate is the C181.

This sequence belongs to the LipB family.

It localises to the mitochondrion. It carries out the reaction octanoyl-[ACP] + L-lysyl-[protein] = N(6)-octanoyl-L-lysyl-[protein] + holo-[ACP] + H(+). It participates in protein modification; protein lipoylation via endogenous pathway; protein N(6)-(lipoyl)lysine from octanoyl-[acyl-carrier-protein]: step 1/2. In terms of biological role, catalyzes the transfer of endogenously produced octanoic acid from octanoyl-acyl-carrier-protein onto the lipoyl domains of lipoate-dependent enzymes. Lipoyl-ACP can also act as a substrate although octanoyl-ACP is likely to be the physiological substrate. This chain is Putative lipoyltransferase 2, mitochondrial, found in Drosophila melanogaster (Fruit fly).